The primary structure comprises 374 residues: Serpin B8 (374 aa).

This sequence belongs to the serpin family. Ov-serpin subfamily.

The protein localises to the cytoplasm. Its function is as follows. Has an important role in epithelial desmosome-mediated cell-cell adhesion. This is Serpin B8 (SERPINB8) from Bos taurus (Bovine).